The following is a 138-amino-acid chain: ATP synthase epsilon chain (138 aa).

This sequence belongs to the ATPase epsilon chain family. F-type ATPases have 2 components, CF(1) - the catalytic core - and CF(0) - the membrane proton channel. CF(1) has five subunits: alpha(3), beta(3), gamma(1), delta(1), epsilon(1). CF(0) has three main subunits: a, b and c.

The protein resides in the cell inner membrane. Its function is as follows. Produces ATP from ADP in the presence of a proton gradient across the membrane. The chain is ATP synthase epsilon chain from Geobacter sulfurreducens (strain ATCC 51573 / DSM 12127 / PCA).